A 174-amino-acid polypeptide reads, in one-letter code: Crossover junction endodeoxyribonuclease RuvC (174 aa).

Residues D8, E67, and D139 contribute to the active site. Positions 8, 67, and 139 each coordinate Mg(2+).

Belongs to the RuvC family. Homodimer which binds Holliday junction (HJ) DNA. The HJ becomes 2-fold symmetrical on binding to RuvC with unstacked arms; it has a different conformation from HJ DNA in complex with RuvA. In the full resolvosome a probable DNA-RuvA(4)-RuvB(12)-RuvC(2) complex forms which resolves the HJ. Requires Mg(2+) as cofactor.

It is found in the cytoplasm. The catalysed reaction is Endonucleolytic cleavage at a junction such as a reciprocal single-stranded crossover between two homologous DNA duplexes (Holliday junction).. Functionally, the RuvA-RuvB-RuvC complex processes Holliday junction (HJ) DNA during genetic recombination and DNA repair. Endonuclease that resolves HJ intermediates. Cleaves cruciform DNA by making single-stranded nicks across the HJ at symmetrical positions within the homologous arms, yielding a 5'-phosphate and a 3'-hydroxyl group; requires a central core of homology in the junction. The consensus cleavage sequence is 5'-(A/T)TT(C/G)-3'. Cleavage occurs on the 3'-side of the TT dinucleotide at the point of strand exchange. HJ branch migration catalyzed by RuvA-RuvB allows RuvC to scan DNA until it finds its consensus sequence, where it cleaves and resolves the cruciform DNA. The sequence is that of Crossover junction endodeoxyribonuclease RuvC from Pseudomonas paraeruginosa (strain DSM 24068 / PA7) (Pseudomonas aeruginosa (strain PA7)).